The sequence spans 93 residues: Putative membrane protein insertion efficiency factor (93 aa).

A disordered region spans residues 72–93 (VPEHFPSWRGPHPKTPSRKTPE). Residues 82 to 93 (PHPKTPSRKTPE) are compositionally biased toward basic residues.

The protein belongs to the UPF0161 family.

It localises to the cell membrane. Functionally, could be involved in insertion of integral membrane proteins into the membrane. This chain is Putative membrane protein insertion efficiency factor, found in Deinococcus geothermalis (strain DSM 11300 / CIP 105573 / AG-3a).